The sequence spans 420 residues: MQTLYLDAFSGISGDMFLGALLDLGLDFEQLKTELAKLHVHGYELTQQREAQSSIYGTSFDVQVAGGKDHGFVEHHHHQHEAGHHHDHEARHLADIEALIDGSDLSDTVKHHAKAIFMEIAQAEAAVHHMPLAEVHFHEVGALDSIVDIVGCCIGLELMQIDTIMASPLSDGSGFINVAHGQMPVPVPAVMQMRVGSAIPIQQRLDVHTELITPTGMGLVKTLVREFGPLPENAVPTRVGYGFGKRDTGGFNALRAVLFEKKKLSQQIVNRTADAVLMIEANLDDQTGEGLGYVMNQLLTAGAYDVFFTPIQMKKDRPATKLTVLGNVNDKDLLTKLILQETTTIGVRYQTWQRTIMQRHFLTVATPYGDVQVKVATYQDIEKKMPEYADCAQLAQQFHIPFRTVYQAALVAVDQLDEEA.

It belongs to the LarC family.

The catalysed reaction is Ni(II)-pyridinium-3,5-bisthiocarboxylate mononucleotide = pyridinium-3,5-bisthiocarboxylate mononucleotide + Ni(2+). Involved in the biosynthesis of a nickel-pincer cofactor ((SCS)Ni(II) pincer complex). Binds Ni(2+), and functions in nickel delivery to pyridinium-3,5-bisthiocarboxylic acid mononucleotide (P2TMN), to form the mature cofactor. Is required for the activation of the lactate racemase LarA. May also be involved in the activation of other nickel-pincer cofactor-dependent enzymes. The protein is Pyridinium-3,5-bisthiocarboxylic acid mononucleotide nickel insertion protein of Lactiplantibacillus plantarum (strain ATCC BAA-793 / NCIMB 8826 / WCFS1) (Lactobacillus plantarum).